The chain runs to 362 residues: H-2 class I histocompatibility antigen, D-K alpha chain (362 aa).

The signal sequence occupies residues 1–24 (MGAMVPRTLLLLLAAALAPAQTRA). An alpha-1 region spans residues 25–114 (GPHSLRYFET…LLRYYNQSEG (90 aa)). Over 25-306 (GPHSLRYFET…RWEPPPSTDS (282 aa)) the chain is Extracellular. An N-linked (GlcNAc...) asparagine glycan is attached at Asn110. The tract at residues 115–206 (GSHTIQRLSG…ELGNATLLHT (92 aa)) is alpha-2. A disulfide bridge connects residues Cys125 and Cys188. 2 N-linked (GlcNAc...) asparagine glycosylation sites follow: Asn200 and Asn280. The interval 207–298 (DSPKAHVTHH…GLPEPLTLRW (92 aa)) is alpha-3. The region spanning 209-297 (PKAHVTHHPR…EGLPEPLTLR (89 aa)) is the Ig-like C1-type domain. A disulfide bond links Cys227 and Cys283. The tract at residues 299–306 (EPPPSTDS) is connecting peptide. A helical membrane pass occupies residues 307–333 (YMVIVAVLGVLGAVAIIGAVVAFVMMM). Over 334–362 (RRNTGGKGGDYTLTPGSQSSEMSLPDCKA) the chain is Cytoplasmic. The disordered stretch occupies residues 340–362 (KGGDYTLTPGSQSSEMSLPDCKA). A phosphoserine mark is found at Ser353 and Ser356.

The protein belongs to the MHC class I family. In terms of assembly, heterodimer of an alpha chain and a beta chain (beta-2-microglobulin). Polyubiquitinated in case of infection by murid herpesvirus 4, by the viral E3 ligase K3 (mK3), leading to target the protein for rapid degradation by the endoplasmic reticulum-associated degradation (ERAD) system. Ubiquitination takes place on lysine, as well as serine and threonine residues present in the cytoplasmic tail. Hydroxylated serine and threonine residues in the cytoplasmic tail are subject to ubiquitination via ester bonds instead of the classical isopeptide linkage. In terms of processing, hydroxylation of residues in the cytoplasmic tail.

It localises to the membrane. Its function is as follows. Involved in the presentation of foreign antigens to the immune system. In Mus musculus (Mouse), this protein is H-2 class I histocompatibility antigen, D-K alpha chain (H2-D1).